Here is a 126-residue protein sequence, read N- to C-terminus: MAIRIVGVDLPQNKRGEIALTYVYGIGRSSSAKILDKAGVDKDLKVKDWTDDQAAKIREIIGAEYKVEGDLRSEVQLNIKRLMDIGCYRGVRHRIGLPVRGQSTKNNARTRKGRKKTVANKKKATK.

Positions 98 to 126 (PVRGQSTKNNARTRKGRKKTVANKKKATK) are disordered. Basic residues predominate over residues 108–126 (ARTRKGRKKTVANKKKATK).

It belongs to the universal ribosomal protein uS13 family. As to quaternary structure, part of the 30S ribosomal subunit. Forms a loose heterodimer with protein S19. Forms two bridges to the 50S subunit in the 70S ribosome.

Located at the top of the head of the 30S subunit, it contacts several helices of the 16S rRNA. In the 70S ribosome it contacts the 23S rRNA (bridge B1a) and protein L5 of the 50S subunit (bridge B1b), connecting the 2 subunits; these bridges are implicated in subunit movement. Contacts the tRNAs in the A and P-sites. The chain is Small ribosomal subunit protein uS13 from Bacteroides fragilis (strain ATCC 25285 / DSM 2151 / CCUG 4856 / JCM 11019 / LMG 10263 / NCTC 9343 / Onslow / VPI 2553 / EN-2).